We begin with the raw amino-acid sequence, 97 residues long: Small ribosomal subunit protein bS6 (97 aa).

This sequence belongs to the bacterial ribosomal protein bS6 family.

In terms of biological role, binds together with bS18 to 16S ribosomal RNA. This is Small ribosomal subunit protein bS6 from Lactococcus lactis subsp. cremoris (strain MG1363).